Consider the following 154-residue polypeptide: MTTFSQKPADVVKKWILIDAEGLVVGRLATVIANHLRGKHKPTFTPHVDDGDNVIVINADKVVFTGKKFTDKVYYWHTGHPGGIKERTARQLLEGRFPERVVEKAVERMVPRGPLGRRQMKNLRVYAGAEHPHVAQQPEVLDVAKLNSKNKKVA.

Belongs to the universal ribosomal protein uL13 family. As to quaternary structure, part of the 50S ribosomal subunit.

Functionally, this protein is one of the early assembly proteins of the 50S ribosomal subunit, although it is not seen to bind rRNA by itself. It is important during the early stages of 50S assembly. In Mesorhizobium japonicum (strain LMG 29417 / CECT 9101 / MAFF 303099) (Mesorhizobium loti (strain MAFF 303099)), this protein is Large ribosomal subunit protein uL13.